The sequence spans 561 residues: Malto-oligosyltrehalose trehalohydrolase (561 aa).

Residue Arg-253–His-258 participates in substrate binding. Asp-255 (nucleophile) is an active-site residue. Glu-286 acts as the Proton donor in catalysis. Substrate is bound by residues Asp-311–His-315 and His-379–Asn-384.

Belongs to the glycosyl hydrolase 13 family. As to quaternary structure, homodimer.

The protein resides in the cytoplasm. It catalyses the reaction hydrolysis of (1-&gt;4)-alpha-D-glucosidic linkage in 4-alpha-D-[(1-&gt;4)-alpha-D-glucanosyl]n trehalose to yield trehalose and (1-&gt;4)-alpha-D-glucan.. It participates in glycan biosynthesis; trehalose biosynthesis. In Saccharolobus solfataricus (strain ATCC 35092 / DSM 1617 / JCM 11322 / P2) (Sulfolobus solfataricus), this protein is Malto-oligosyltrehalose trehalohydrolase (treZ).